The sequence spans 387 residues: Alpha-maltose-1-phosphate synthase (387 aa).

The protein belongs to the glycosyltransferase group 1 family.

It carries out the reaction ADP-alpha-D-glucose + alpha-D-glucose 1-phosphate = alpha-maltose 1-phosphate + ADP + H(+). The protein operates within capsule biogenesis; capsule polysaccharide biosynthesis. It participates in glycan biosynthesis; glycogen biosynthesis. In terms of biological role, involved in the biosynthesis of the maltose-1-phosphate (M1P) building block required for alpha-glucan production by the key enzyme GlgE. Catalyzes the formation of an alpha-1,4 linkage between glucose from ADP-glucose and glucose 1-phosphate (G1P) to yield maltose-1-phosphate (M1P). This chain is Alpha-maltose-1-phosphate synthase, found in Mycobacterium tuberculosis (strain CDC 1551 / Oshkosh).